Reading from the N-terminus, the 209-residue chain is Protein-L-isoaspartate O-methyltransferase (209 aa).

The active site involves S60.

It belongs to the methyltransferase superfamily. L-isoaspartyl/D-aspartyl protein methyltransferase family.

The protein localises to the cytoplasm. The enzyme catalyses [protein]-L-isoaspartate + S-adenosyl-L-methionine = [protein]-L-isoaspartate alpha-methyl ester + S-adenosyl-L-homocysteine. In terms of biological role, catalyzes the methyl esterification of L-isoaspartyl residues in peptides and proteins that result from spontaneous decomposition of normal L-aspartyl and L-asparaginyl residues. It plays a role in the repair and/or degradation of damaged proteins. In Photobacterium profundum (strain SS9), this protein is Protein-L-isoaspartate O-methyltransferase.